A 289-amino-acid chain; its full sequence is Acetylglutamate kinase (289 aa).

Residues 60 to 61, Arg-82, and Asn-186 contribute to the substrate site; that span reads GG.

This sequence belongs to the acetylglutamate kinase family. ArgB subfamily.

The protein localises to the cytoplasm. The enzyme catalyses N-acetyl-L-glutamate + ATP = N-acetyl-L-glutamyl 5-phosphate + ADP. It participates in amino-acid biosynthesis; L-arginine biosynthesis; N(2)-acetyl-L-ornithine from L-glutamate: step 2/4. Catalyzes the ATP-dependent phosphorylation of N-acetyl-L-glutamate. The sequence is that of Acetylglutamate kinase from Methanoculleus marisnigri (strain ATCC 35101 / DSM 1498 / JR1).